The chain runs to 140 residues: Small ribosomal subunit protein uS11c (140 aa).

Belongs to the universal ribosomal protein uS11 family. Part of the 30S ribosomal subunit.

The protein resides in the plastid. Its subcellular location is the chloroplast. The protein is Small ribosomal subunit protein uS11c of Pelargonium hortorum (Common geranium).